The chain runs to 504 residues: Diacylglycerol O-acyltransferase 1B (504 aa).

The interval 1-72 (MAISDEPESV…VNSQQQNEKQ (72 aa)) is disordered. Over residues 24 to 41 (SATSTAGLFNSPETTTDS) the composition is skewed to polar residues. The span at 53–65 (DDSINSDDAAVNS) shows a compositional bias: low complexity. Transmembrane regions (helical) follow at residues 108–128 (HAGLFNLCIVVLVAVNSRLII), 152–172 (WPLFMCCLSLVVFPFAAFIVE), 184–204 (VVVVLHIIITSTSLFYPVLVI), 209–229 (SAFVSGVTLMLFSCVVWLKLV), 259–279 (YPYNVSFKSLAYFLVAPTLCY), 301–321 (LIIFTGVMGFIIEQYINPIVQ), and 348–368 (VWLCMFYCFFHLWLNILAELL). The short motif at 375–381 (FYKDWWN) is the FYXDWWN motif element. A run of 3 helical transmembrane segments spans residues 416 to 436 (AAALLIAFLVSALFHELCIAV), 438 to 458 (CHIFKLWAFGGIMFQVPLVLI), and 471 to 491 (VGNMIFWFIFSILGQPMCVLL). Histidine 430 is a catalytic residue.

The protein belongs to the membrane-bound acyltransferase family. Sterol o-acyltransferase subfamily. Highly expressed in flowers and pods. Expressed at low levels in roots, stems and leaves.

Its subcellular location is the endoplasmic reticulum membrane. The catalysed reaction is an acyl-CoA + a 1,2-diacyl-sn-glycerol = a triacyl-sn-glycerol + CoA. The protein operates within glycerolipid metabolism; triacylglycerol biosynthesis. In terms of biological role, major contributors to triacylglycerol (TAG) synthesis and oil accumulation in developing seeds. Catalyzes the acylation of the sn-3 hydroxy group of sn-1,2-diacylglycerol using acyl-CoA. Has a marked preference for oleoyl-CoA and sn-1,2-dioleoylglycerol over vernoloyl-CoA and sn-1,2-divernoloylglycerol. The chain is Diacylglycerol O-acyltransferase 1B from Glycine max (Soybean).